The following is a 641-amino-acid chain: Chaperone protein DnaK 2 (641 aa).

Thr199 carries the post-translational modification Phosphothreonine; by autocatalysis. Low complexity predominate over residues 601–616 (MAQQQAQAQHAQSSQQ). The disordered stretch occupies residues 601-641 (MAQQQAQAQHAQSSQQTNDTTGQSSTDDDVFEAEFEEVKDK). The span at 626-635 (TDDDVFEAEF) shows a compositional bias: acidic residues.

Belongs to the heat shock protein 70 family.

Acts as a chaperone. The protein is Chaperone protein DnaK 2 of Photobacterium profundum (strain SS9).